The following is a 403-amino-acid chain: Imidazolonepropionase (403 aa).

Residues His69 and His71 each coordinate Fe(3+). The Zn(2+) site is built by His69 and His71. The 4-imidazolone-5-propanoate site is built by Arg78, Tyr141, and His174. Tyr141 provides a ligand contact to N-formimidoyl-L-glutamate. His239 contributes to the Fe(3+) binding site. His239 is a binding site for Zn(2+). Gln242 contributes to the 4-imidazolone-5-propanoate binding site. Asp314 contacts Fe(3+). Asp314 contributes to the Zn(2+) binding site. N-formimidoyl-L-glutamate-binding residues include Asn316 and Gly318. Ser319 contacts 4-imidazolone-5-propanoate.

Belongs to the metallo-dependent hydrolases superfamily. HutI family. Zn(2+) serves as cofactor. Requires Fe(3+) as cofactor.

It is found in the cytoplasm. It catalyses the reaction 4-imidazolone-5-propanoate + H2O = N-formimidoyl-L-glutamate. It participates in amino-acid degradation; L-histidine degradation into L-glutamate; N-formimidoyl-L-glutamate from L-histidine: step 3/3. Its function is as follows. Catalyzes the hydrolytic cleavage of the carbon-nitrogen bond in imidazolone-5-propanoate to yield N-formimidoyl-L-glutamate. It is the third step in the universal histidine degradation pathway. In Legionella pneumophila (strain Corby), this protein is Imidazolonepropionase.